A 463-amino-acid chain; its full sequence is Annexin A7 (463 aa).

Composition is skewed to pro residues over residues 1-18 (MSYP…PGYP) and 26-38 (FPPP…PSGF). 2 disordered regions span residues 1 to 54 (MSYP…SSGY) and 71 to 153 (GYPG…THGT). Positions 1–140 (MSYPGYPPTG…QYPGGQSPYP (140 aa)) are repeat-rich region. Positions 5–20 (GYPPTGYPPFPGYPPT) are 3 X 5 AA tandem repeats of G-Y-P-P-X. Gly residues predominate over residues 86-99 (GGQGFGAPPGGAGF). 4 Annexin repeats span residues 160–231 (FDAM…ALFM), 232–303 (PSTY…SMCQ), 315–387 (QLAQ…TILQ), and 391–462 (NRPA…AIVG). K208 carries the post-translational modification N6-acetyllysine.

This sequence belongs to the annexin family. As to quaternary structure, interacts with PDCD6.

Functionally, calcium/phospholipid-binding protein which promotes membrane fusion and is involved in exocytosis. The protein is Annexin A7 (ANXA7) of Bos taurus (Bovine).